The following is a 120-amino-acid chain: ATP-dependent Clp protease adapter protein ClpS (120 aa).

Residues 1-20 are disordered; sequence MATKSPVNPKVPLVQEPDRD.

This sequence belongs to the ClpS family. As to quaternary structure, binds to the N-terminal domain of the chaperone ClpA.

Involved in the modulation of the specificity of the ClpAP-mediated ATP-dependent protein degradation. The polypeptide is ATP-dependent Clp protease adapter protein ClpS (Albidiferax ferrireducens (strain ATCC BAA-621 / DSM 15236 / T118) (Rhodoferax ferrireducens)).